The sequence spans 147 residues: Protein-export protein SecB (147 aa).

It belongs to the SecB family. As to quaternary structure, homotetramer, a dimer of dimers. One homotetramer interacts with 1 SecA dimer.

Its subcellular location is the cytoplasm. Its function is as follows. One of the proteins required for the normal export of preproteins out of the cell cytoplasm. It is a molecular chaperone that binds to a subset of precursor proteins, maintaining them in a translocation-competent state. It also specifically binds to its receptor SecA. The protein is Protein-export protein SecB of Neisseria meningitidis serogroup C (strain 053442).